The sequence spans 117 residues: MIDNKHQIPREHGQAGEKLAMNYLAERGLNFVEANVRYKFGEIDLIMKDGKEWIFIEVKYRSKAQYGGALNALSPAQIGRLRRAAEHYIQIHKIDAVCRFDLIAIDASQIHWLPNAF.

Belongs to the UPF0102 family.

In Shewanella woodyi (strain ATCC 51908 / MS32), this protein is UPF0102 protein Swoo_0351.